We begin with the raw amino-acid sequence, 227 residues long: PKHD-type hydroxylase Caul_0045 (227 aa).

The 101-residue stretch at 78 to 178 (TILSPLFNRY…RTASFFWIQS (101 aa)) folds into the Fe2OG dioxygenase domain. Fe cation is bound by residues histidine 96, aspartate 98, and histidine 159. Arginine 169 is a 2-oxoglutarate binding site.

Fe(2+) is required as a cofactor. L-ascorbate serves as cofactor.

This Caulobacter sp. (strain K31) protein is PKHD-type hydroxylase Caul_0045.